The primary structure comprises 338 residues: Serpentine receptor class alpha-31 (338 aa).

7 helical membrane-spanning segments follow: residues 23–43 (GNHC…VFAI), 59–79 (LLFS…GIRI), 108–125 (LYYY…SLFF), 142–162 (FSKI…YWIF), 188–208 (VNEF…VIFF), 240–260 (VCII…TTEI), and 276–296 (SIAF…IIIY).

Belongs to the nematode receptor-like protein sra family.

The protein localises to the membrane. The sequence is that of Serpentine receptor class alpha-31 (sra-31) from Caenorhabditis elegans.